The following is a 354-amino-acid chain: Ion-translocating oxidoreductase complex subunit D (354 aa).

The next 4 membrane-spanning stretches (helical) occupy residues 19-39, 40-60, 77-99, and 119-139; these read IMLLVFCAAVPGICTEIYYFG, FGVLFQILLSVFFSVSFEFLV, AAVTGVLIGISLPSLSPWWLSFF, and IFNPAMTGYSILLVSFPILMT. T187 is subject to FMN phosphoryl threonine. 5 helical membrane passes run 221-241, 245-265, 268-288, 295-315, and 319-339; these read WISINISFLIGGIVLLGFNVI, IPVSILFSLYVFFALDYYFFK, MYYPIMQLFFGSTMFSVFFIA, SITKIGRIVFGCIVGFLIWLI, and GNYPDAIAFSILLSNSIVPLI.

Belongs to the NqrB/RnfD family. In terms of assembly, the complex is composed of six subunits: RnfA, RnfB, RnfC, RnfD, RnfE and RnfG. FMN serves as cofactor.

The protein resides in the cell inner membrane. Its function is as follows. Part of a membrane-bound complex that couples electron transfer with translocation of ions across the membrane. The protein is Ion-translocating oxidoreductase complex subunit D of Buchnera aphidicola subsp. Baizongia pistaciae (strain Bp).